We begin with the raw amino-acid sequence, 688 residues long: Glycine--tRNA ligase beta subunit (688 aa).

This sequence belongs to the class-II aminoacyl-tRNA synthetase family. Tetramer of two alpha and two beta subunits.

It localises to the cytoplasm. The catalysed reaction is tRNA(Gly) + glycine + ATP = glycyl-tRNA(Gly) + AMP + diphosphate. This Psychromonas ingrahamii (strain DSM 17664 / CCUG 51855 / 37) protein is Glycine--tRNA ligase beta subunit.